Reading from the N-terminus, the 250-residue chain is Complement factor B-like protease (250 aa).

3 consecutive Sushi domains span residues 3-73 (TRCD…KCRA), 74-133 (VWCP…VCDD), and 136-193 (GDCP…QCRA). Disulfide bonds link C5–C44, C30–C71, C76–C118, C104–C131, C138–C178, and C164–C191. The N-linked (GlcNAc...) asparagine glycan is linked to N115. An N-linked (GlcNAc...) asparagine glycan is attached at N221.

The protein belongs to the peptidase S1 family. In terms of tissue distribution, plasma.

It localises to the secreted. Required in both the classical and alternate pathways of the complement system. The chain is Complement factor B-like protease from Gallus gallus (Chicken).